A 374-amino-acid chain; its full sequence is DNA replication and repair protein RecF (374 aa).

30 to 37 (GENAQGKT) serves as a coordination point for ATP.

This sequence belongs to the RecF family.

Its subcellular location is the cytoplasm. The RecF protein is involved in DNA metabolism; it is required for DNA replication and normal SOS inducibility. RecF binds preferentially to single-stranded, linear DNA. It also seems to bind ATP. This chain is DNA replication and repair protein RecF, found in Lactiplantibacillus plantarum (strain ATCC BAA-793 / NCIMB 8826 / WCFS1) (Lactobacillus plantarum).